The sequence spans 249 residues: ATP synthase subunit a (249 aa).

Transmembrane regions (helical) follow at residues 33–53, 92–112, 131–151, 196–216, and 217–237; these read GQVF…SLLA, VPFI…GALI, INTT…AGFS, LVVA…AMIL, and GLFT…SYIG.

Belongs to the ATPase A chain family. As to quaternary structure, F-type ATPases have 2 components, CF(1) - the catalytic core - and CF(0) - the membrane proton channel. CF(1) has five subunits: alpha(3), beta(3), gamma(1), delta(1), epsilon(1). CF(0) has four main subunits: a, b, b' and c.

The protein resides in the cellular thylakoid membrane. In terms of biological role, key component of the proton channel; it plays a direct role in the translocation of protons across the membrane. The protein is ATP synthase subunit a of Synechococcus elongatus (strain ATCC 33912 / PCC 7942 / FACHB-805) (Anacystis nidulans R2).